Here is a 357-residue protein sequence, read N- to C-terminus: Probable butyrate kinase 1 (357 aa).

The protein belongs to the acetokinase family.

It localises to the cytoplasm. The catalysed reaction is butanoate + ATP = butanoyl phosphate + ADP. This Thermotoga maritima (strain ATCC 43589 / DSM 3109 / JCM 10099 / NBRC 100826 / MSB8) protein is Probable butyrate kinase 1.